The chain runs to 451 residues: MKKIIPTNLFKLISILFILTPFFAWSAPQETLIDRVVAVVNDNIILKSELDAEVNLAKQDLQARNIPVTNPEELASKVLDKIILERLQLQRINQLGIKIADDELFSQIQEIAKQNNLTVIELRDRLNMSQKNGFESFRERIRQQMLFQKLREVEVLSKTQVTEDEVSNFIQRQALVQSDVEYHLGHIMVSLPESATPDQRDASKQKAQEILQKIRTGGDFSQMAVRYSEGSKALQGGDLGWLGIDQIPTFFNDALNQLEIGETSDVIRSPVGFHIIQLQGKRNKNSQIVKQYHLYRFILLSEDAQNKQQPSPTLVKLAESLNSLESFKQLNEKYSDIPASVNANGNLGWQTAKEMSPEYYQAIEALQPGHAAKPFATEKGWVILFLDGIRDQDLSLKDKRKQAMQTLRMKKANESYEIWLRRLKDEALIDIRLEDPEIMKKQPSHEEANAN.

Positions 1–26 (MKKIIPTNLFKLISILFILTPFFAWS) are cleaved as a signal peptide. 2 PpiC domains span residues 179–280 (DVEY…QLQG) and 290–388 (KQYH…FLDG).

It localises to the periplasm. The catalysed reaction is [protein]-peptidylproline (omega=180) = [protein]-peptidylproline (omega=0). Chaperone involved in the correct folding and assembly of outer membrane proteins. Recognizes specific patterns of aromatic residues and the orientation of their side chains, which are found more frequently in integral outer membrane proteins. May act in both early periplasmic and late outer membrane-associated steps of protein maturation. The polypeptide is Chaperone SurA (Hydrogenovibrio crunogenus (strain DSM 25203 / XCL-2) (Thiomicrospira crunogena)).